The primary structure comprises 244 residues: MESITIENYVFPSTMVNPPGSTNTFFLAGAGNRGLEIEGKFVKFTAIGVYLEESALPFLAAKWKSKSSEELANSLDFFRDIVTGPFEKFTRVTMILPLTGKQYSEKVAENCVAHWKAIGTYTDAESQAIEKLLNIFQNETFPPGASILFTQSPVGALTISFIKDDSITGTGNAVIENKQLSEAVLESIIGKHGVSPAAKCSIAERVSGLFKKSYADASVFEKPGIEKSSDPVIEEKPTIPEIGV.

Substrate is bound by residues Thr45, Asn110, and Ser187.

This sequence belongs to the chalcone isomerase family.

It carries out the reaction a chalcone = a flavanone.. Its pathway is secondary metabolite biosynthesis; flavonoid biosynthesis. Catalyzes the intramolecular cyclization of bicyclic chalcones into tricyclic (S)-flavanones. Responsible for the isomerization of 4,2',4',6'-tetrahydroxychalcone (also termed chalcone) into naringenin. This is Chalcone--flavanone isomerase (CHI) from Nicotiana tabacum (Common tobacco).